The sequence spans 298 residues: ATP phosphoribosyltransferase (298 aa).

Belongs to the ATP phosphoribosyltransferase family. Long subfamily. Requires Mg(2+) as cofactor.

The protein resides in the cytoplasm. The enzyme catalyses 1-(5-phospho-beta-D-ribosyl)-ATP + diphosphate = 5-phospho-alpha-D-ribose 1-diphosphate + ATP. The protein operates within amino-acid biosynthesis; L-histidine biosynthesis; L-histidine from 5-phospho-alpha-D-ribose 1-diphosphate: step 1/9. Its activity is regulated as follows. Feedback inhibited by histidine. Its function is as follows. Catalyzes the condensation of ATP and 5-phosphoribose 1-diphosphate to form N'-(5'-phosphoribosyl)-ATP (PR-ATP). Has a crucial role in the pathway because the rate of histidine biosynthesis seems to be controlled primarily by regulation of HisG enzymatic activity. The protein is ATP phosphoribosyltransferase of Tolumonas auensis (strain DSM 9187 / NBRC 110442 / TA 4).